A 335-amino-acid polypeptide reads, in one-letter code: Arylacetonitrilase (335 aa).

The 286-residue stretch at 6 to 291 (LKVAITQAQP…EGIVYADLDM (286 aa)) folds into the CN hydrolase domain. Catalysis depends on E46, which acts as the Proton acceptor. The active site involves K127. C168 acts as the Nucleophile in catalysis.

The protein belongs to the carbon-nitrogen hydrolase superfamily. Nitrilase family.

It catalyses the reaction a nitrile + 2 H2O = a carboxylate + NH4(+). The catalysed reaction is 4-chlorophenylacetonitrile + 2 H2O = 4-chlorophenylacetate + NH4(+). Functionally, nitrilase that hydrolyzes preferentially phenylacetonitrile, (R,S)-mandelonitrile, and 3-indolylacetonitrile. The sequence is that of Arylacetonitrilase from Arthroderma benhamiae (strain ATCC MYA-4681 / CBS 112371) (Trichophyton mentagrophytes).